A 217-amino-acid polypeptide reads, in one-letter code: MATVEPETTPTPNPPTTEEEKTESNQEVANPEHYIKHPLQNRWALWFFKNDKSKTWQANLRLISKFDTVEDFWALYNHIQLSSNLMPGCDYSLFKDGIEPMWEDEKNKRGGRWLITLNKQQRRSDLDRFWLETLLCLIGESFDDYSDDVCGAVVNVRAKGDKIAIWTTECENREAVTHIGRVYKERLGLPPKIVIGYQSHADTATKSGSTTKNRFVV.

The interval 1 to 30 (MATVEPETTPTPNPPTTEEEKTESNQEVAN) is disordered. Position 2 is an N-acetylalanine (Ala-2). Position 22 is a phosphothreonine (Thr-22). Residues 37–40 (HPLQ) are EIF4EBP1/2/3 binding. 56 to 57 (WQ) is a binding site for mRNA. The interval 73–77 (WALYN) is EIF4EBP1/2/3 binding. Residue 102–103 (WE) participates in mRNA binding. The EIF4EBP1/2/3 binding stretch occupies residues 132–139 (ETLLCLIG). Residues 157–162 (RAKGDK) and 205–207 (TKS) each bind mRNA. Ser-209 is subject to Phosphoserine; by PKC and MKNK2.

The protein belongs to the eukaryotic initiation factor 4E family. As to quaternary structure, eIF4F is a multi-subunit complex, the composition of which varies with external and internal environmental conditions. It is composed of at least EIF4A, EIF4E and EIF4G1/EIF4G3. EIF4E is also known to interact with other partners. Interacts with EIF4ENIF1/4E-T; promotes recruitment to P-bodies and import into the nucleus. Hypophosphorylated EIF4EBP1, EIF4EBP2 and EIF4EBP3 compete with EIF4G1/EIF4G3 to interact with EIF4E; insulin stimulated MAP-kinase (MAPK1 and MAPK3) phosphorylation of EIF4EBP1 causes dissociation of the complex allowing EIF4G1/EIF4G3 to bind and consequent initiation of translation. Interacts mutually exclusive with EIF4A1 or EIF4A2. Interacts with NGDN and PIWIL2. Component of the CYFIP1-EIF4E-FMR1 complex composed of CYFIP, EIF4E and FMR1. Interacts directly with CYFIP1. Interacts with CLOCK. Binds to MKNK2 in nucleus. Interacts with LIMD1, WTIP and AJUBA. Interacts with APOBEC3G in an RNA-dependent manner. Interacts with LARP1. Interacts with METTL3. Interacts with RBM24; this interaction prevents EIF4E from binding to p53/TP53 mRNA and inhibits the assembly of translation initiation complex. Interacts with DDX3X; interaction is direct and in an RNA-independent manner; this interaction enhances EIF4E cap-binding ability and is required for the repression of cap-dependent translation and the increase of IRES-mediated translation. DDX3X competes with EIF4G1 for interaction with EIF4E. Interacts with EIF4G1; which in a mutual exclusive interaction associates either with EIF1 or with EIF4E on a common binding site. Interacts with BTG4 and CNOT7. Interacts with LRPPRC (via N-terminus); the interaction promotes association of EIF4E with 4ESE-containing mRNAs. Interacts with mRNA cleavage enzyme CPSF3 and its cofactor CPSF1. Interacts (via RING-type zinc finger) with PML; the interaction results in conformational changes of both interacting proteins and reduces EIF4E affinity for the 5' m7G cap of mRNA, thus reducing EIF4E-mediated mRNA nuclear export. Interacts with homeobox protein HHEX/PRH; the interaction inhibits EIF4E-mediated mRNA nuclear export. Interacts with homeobox protein HOXA9; the interaction positively regulates EIF4E-mediated mRNA nuclear export. Interacts with homeobox protein EMX2. In terms of assembly, (Microbial infection) Interacts with Lassa virus Z protein. (Microbial infection) Interacts with Lymphocytic choriomeningitis virus (LCMV) Z protein (via RING-type zinc finger); the interaction results in conformational changes of both interacting proteins and reduces EIF4E affinity for the m7G mRNA cap structure. As to quaternary structure, (Microbial infection) Interacts (via cap-binding region) with potato virus Y VPg; this interaction mediates the translation of the VPg-viral RNA conjugates and interferes with the cellular EIF4E-dependent mRNA export and translation. Phosphorylation increases the ability of the protein to bind to mRNA caps and to form the eIF4F complex. Phosphorylation also enhances its mRNA transport function. Phosphorylation at Ser-209 is not essential for protein synthesis.

Its subcellular location is the cytoplasm. The protein resides in the P-body. It localises to the stress granule. It is found in the nucleus. The protein localises to the nucleus speckle. Its subcellular location is the nuclear body. Its function is as follows. Acts in the cytoplasm to initiate and regulate protein synthesis and is required in the nucleus for export of a subset of mRNAs from the nucleus to the cytoplasm which promotes processes such as RNA capping, processing and splicing. Component of the protein complex eIF4F, which is involved in the recognition of the mRNA cap, ATP-dependent unwinding of 5'-terminal secondary structure and recruitment of mRNA to the ribosome. This protein recognizes and binds the 7-methylguanosine (m7G)-containing mRNA cap during an early step in the initiation of protein synthesis and facilitates ribosome binding by inducing the unwinding of the mRNAs secondary structures. Together with EIF4G1, antagonizes the scanning promoted by EIF1-EIF4G1 and is required for TISU translation, a process where the TISU element recognition makes scanning unnecessary. In addition to its role in translation initiation, also acts as a regulator of translation and stability in the cytoplasm. Component of the CYFIP1-EIF4E-FMR1 complex which binds to the mRNA cap and mediates translational repression: in the complex, EIF4E mediates the binding to the mRNA cap. Component of a multiprotein complex that sequesters and represses translation of proneurogenic factors during neurogenesis. In P-bodies, component of a complex that mediates the storage of translationally inactive mRNAs in the cytoplasm and prevents their degradation. May play an important role in spermatogenesis through translational regulation of stage-specific mRNAs during germ cell development. As well as its roles in translation, also involved in mRNA nucleocytoplasmic transport. Its role in mRNA export from the nucleus to the cytoplasm relies on its ability to bind the m7G cap of RNAs and on the presence of the 50-nucleotide EIF4E sensitivity element (4ESE) in the 3'UTR of sensitive transcripts. Interaction with the 4ESE is mediated by LRPPRC which binds simultaneously to both EIF4E and the 4ESE, thereby acting as a platform for assembly for the RNA export complex. EIF4E-dependent mRNA export is independent of ongoing protein or RNA synthesis and is also NFX1-independent but is XPO1-dependent with LRPPRC interacting with XPO1 to form an EIF4E-dependent mRNA export complex. Alters the composition of the cytoplasmic face of the nuclear pore to promote RNA export by reducing RANBP2 expression, relocalizing nucleoporin NUP214 and increasing expression of RANBP1 and RNA export factors DDX19 and GLE1. Promotes the nuclear export of cyclin CCND1 mRNA. Promotes the nuclear export of NOS2/iNOS mRNA. Promotes the nuclear export of MDM2 mRNA. Promotes the export of additional mRNAs, including others involved in the cell cycle. In the nucleus, binds to capped splice factor-encoding mRNAs and stimulates their nuclear export to enhance splice factor production by increasing their cytoplasmic availability to the translation machinery. May also regulate splicing through interaction with the spliceosome in an RNA and m7G cap-dependent manner. Also binds to some pre-mRNAs and may play a role in their recruitment to the spliceosome. Promotes steady-state capping of a subset of coding and non-coding RNAs by mediating nuclear export of capping machinery mRNAs including RNMT, RNGTT and RAMAC to enhance their translation. Stimulates mRNA 3'-end processing by promoting the expression of several core cleavage complex factors required for mRNA cleavage and polyadenylation, and may also have a direct effect through its interaction with the CPSF3 cleavage enzyme. Rescues cells from apoptosis by promoting activation of serine/threonine-protein kinase AKT1 through mRNA export of NBS1 which potentiates AKT1 phosphorylation and also through mRNA export of AKT1 effectors, allowing for increased production of these proteins. This is Eukaryotic translation initiation factor 4E from Homo sapiens (Human).